Reading from the N-terminus, the 370-residue chain is DNA primase small subunit PriS (370 aa).

Residues Asp-92, Asp-94, and Asp-272 contribute to the active site.

Belongs to the eukaryotic-type primase small subunit family. Heterodimer of a small subunit (PriS) and a large subunit (PriL). The cofactor is Mg(2+). It depends on Mn(2+) as a cofactor.

Catalytic subunit of DNA primase, an RNA polymerase that catalyzes the synthesis of short RNA molecules used as primers for DNA polymerase during DNA replication. The small subunit contains the primase catalytic core and has DNA synthesis activity on its own. Binding to the large subunit stabilizes and modulates the activity, increasing the rate of DNA synthesis while decreasing the length of the DNA fragments, and conferring RNA synthesis capability. The DNA polymerase activity may enable DNA primase to also catalyze primer extension after primer synthesis. May also play a role in DNA repair. The chain is DNA primase small subunit PriS from Picrophilus torridus (strain ATCC 700027 / DSM 9790 / JCM 10055 / NBRC 100828 / KAW 2/3).